The following is a 298-amino-acid chain: uncharacterized protein (298 aa).

Asp-119 is an active-site residue.

This sequence belongs to the pseudouridine synthase RluA family.

It carries out the reaction a uridine in RNA = a pseudouridine in RNA. This is an uncharacterized protein from Helicobacter pylori (strain ATCC 700392 / 26695) (Campylobacter pylori).